A 208-amino-acid chain; its full sequence is Flavin-dependent thymidylate synthase (208 aa).

The 208-residue stretch at M1 to H208 folds into the ThyX domain. FAD-binding positions include S50 and R74–R76. DUMP is bound by residues E71–R74, S84–R86, and K147. Positions R74–S84 match the ThyX motif motif. FAD contacts are provided by residues N163–R165 and N169. Position 174 (R174) interacts with dUMP. Residue R174 is the Involved in ionization of N3 of dUMP, leading to its activation of the active site.

Belongs to the thymidylate synthase ThyX family. Homotetramer. Requires FAD as cofactor.

The enzyme catalyses dUMP + (6R)-5,10-methylene-5,6,7,8-tetrahydrofolate + NADPH + H(+) = dTMP + (6S)-5,6,7,8-tetrahydrofolate + NADP(+). It functions in the pathway pyrimidine metabolism; dTTP biosynthesis. Catalyzes the reductive methylation of 2'-deoxyuridine-5'-monophosphate (dUMP) to 2'-deoxythymidine-5'-monophosphate (dTMP) while utilizing 5,10-methylenetetrahydrofolate (mTHF) as the methyl donor, and NAD(P)H and FADH(2) as the reductant. This chain is Flavin-dependent thymidylate synthase, found in Helicobacter pylori (strain ATCC 700392 / 26695) (Campylobacter pylori).